The following is a 97-amino-acid chain: Mapk-regulated corepressor-interacting protein 1 (97 aa).

The segment covering 1–26 (MTSSSTPRMHTYKRTSSPRSPTNTGE) has biased composition (polar residues). 2 disordered regions span residues 1–27 (MTSS…TGEL) and 54–97 (QNHE…SKKS). Composition is skewed to basic and acidic residues over residues 54–68 (QNHE…EYVE) and 84–97 (SDLK…SKKS). Residues 80–84 (PVDLS) carry the PXDLS motif motif.

This sequence belongs to the MCRIP family.

It localises to the nucleus. The protein resides in the cytoplasm. Its subcellular location is the stress granule. May play a role in the regulation of the epithelial-mesenchymal transition. In Danio rerio (Zebrafish), this protein is Mapk-regulated corepressor-interacting protein 1 (mcrip1).